The chain runs to 247 residues: ATP synthase subunit a, chloroplastic (247 aa).

A run of 5 helical transmembrane segments spans residues 38-58 (QVLITSWFVITILLGSVIIAV), 95-115 (VPFIGTMFLFIFVSNWSGALL), 134-154 (INTTVALALLTSAAYFYAGLS), 199-219 (LVVVVLVSLVPLVVPIPVMFL), and 220-240 (GLFTSGIQALIFATLAAAYIG).

This sequence belongs to the ATPase A chain family. F-type ATPases have 2 components, CF(1) - the catalytic core - and CF(0) - the membrane proton channel. CF(1) has five subunits: alpha(3), beta(3), gamma(1), delta(1), epsilon(1). CF(0) has four main subunits: a, b, b' and c.

Its subcellular location is the plastid. It is found in the chloroplast thylakoid membrane. In terms of biological role, key component of the proton channel; it plays a direct role in the translocation of protons across the membrane. This chain is ATP synthase subunit a, chloroplastic, found in Sorghum bicolor (Sorghum).